The primary structure comprises 498 residues: ATP synthase subunit beta, chloroplastic (498 aa).

172-179 lines the ATP pocket; it reads GGAGVGKT.

It belongs to the ATPase alpha/beta chains family. F-type ATPases have 2 components, CF(1) - the catalytic core - and CF(0) - the membrane proton channel. CF(1) has five subunits: alpha(3), beta(3), gamma(1), delta(1), epsilon(1). CF(0) has four main subunits: a(1), b(1), b'(1) and c(9-12).

It localises to the plastid. The protein resides in the chloroplast thylakoid membrane. It catalyses the reaction ATP + H2O + 4 H(+)(in) = ADP + phosphate + 5 H(+)(out). Produces ATP from ADP in the presence of a proton gradient across the membrane. The catalytic sites are hosted primarily by the beta subunits. This Populus tremuloides (Quaking aspen) protein is ATP synthase subunit beta, chloroplastic.